A 269-amino-acid chain; its full sequence is Bifunctional protein FolD (269 aa).

Residues 149 to 151 (GLG) and Val215 each bind NADP(+).

This sequence belongs to the tetrahydrofolate dehydrogenase/cyclohydrolase family. As to quaternary structure, homodimer.

The enzyme catalyses (6R)-5,10-methylene-5,6,7,8-tetrahydrofolate + NADP(+) = (6R)-5,10-methenyltetrahydrofolate + NADPH. It catalyses the reaction (6R)-5,10-methenyltetrahydrofolate + H2O = (6R)-10-formyltetrahydrofolate + H(+). The protein operates within one-carbon metabolism; tetrahydrofolate interconversion. Catalyzes the oxidation of 5,10-methylenetetrahydrofolate to 5,10-methenyltetrahydrofolate and then the hydrolysis of 5,10-methenyltetrahydrofolate to 10-formyltetrahydrofolate. The protein is Bifunctional protein FolD of Mycoplasma pneumoniae (strain ATCC 29342 / M129 / Subtype 1) (Mycoplasmoides pneumoniae).